The following is a 290-amino-acid chain: Glycine--tRNA ligase alpha subunit (290 aa).

The protein belongs to the class-II aminoacyl-tRNA synthetase family. In terms of assembly, tetramer of two alpha and two beta subunits.

The protein resides in the cytoplasm. It catalyses the reaction tRNA(Gly) + glycine + ATP = glycyl-tRNA(Gly) + AMP + diphosphate. In Maridesulfovibrio salexigens (strain ATCC 14822 / DSM 2638 / NCIMB 8403 / VKM B-1763) (Desulfovibrio salexigens), this protein is Glycine--tRNA ligase alpha subunit.